The chain runs to 443 residues: Thymidine phosphorylase (443 aa).

Belongs to the thymidine/pyrimidine-nucleoside phosphorylase family. In terms of assembly, homodimer.

It carries out the reaction thymidine + phosphate = 2-deoxy-alpha-D-ribose 1-phosphate + thymine. It participates in pyrimidine metabolism; dTMP biosynthesis via salvage pathway; dTMP from thymine: step 1/2. In terms of biological role, the enzymes which catalyze the reversible phosphorolysis of pyrimidine nucleosides are involved in the degradation of these compounds and in their utilization as carbon and energy sources, or in the rescue of pyrimidine bases for nucleotide synthesis. The polypeptide is Thymidine phosphorylase (Shewanella halifaxensis (strain HAW-EB4)).